We begin with the raw amino-acid sequence, 78 residues long: Acyl carrier protein (78 aa).

The Carrier domain occupies 1 to 76 (MALFEDIQAV…DVVKYIEDNK (76 aa)). Serine 36 bears the O-(pantetheine 4'-phosphoryl)serine mark.

It belongs to the acyl carrier protein (ACP) family. 4'-phosphopantetheine is transferred from CoA to a specific serine of apo-ACP by AcpS. This modification is essential for activity because fatty acids are bound in thioester linkage to the sulfhydryl of the prosthetic group.

The protein resides in the cytoplasm. The protein operates within lipid metabolism; fatty acid biosynthesis. Functionally, carrier of the growing fatty acid chain in fatty acid biosynthesis. The chain is Acyl carrier protein from Helicobacter pylori (strain ATCC 700392 / 26695) (Campylobacter pylori).